The following is a 382-amino-acid chain: Anhydro-N-acetylmuramic acid kinase (382 aa).

Residue 9–16 (GTSLDGID) participates in ATP binding.

This sequence belongs to the anhydro-N-acetylmuramic acid kinase family.

The catalysed reaction is 1,6-anhydro-N-acetyl-beta-muramate + ATP + H2O = N-acetyl-D-muramate 6-phosphate + ADP + H(+). It functions in the pathway amino-sugar metabolism; 1,6-anhydro-N-acetylmuramate degradation. It participates in cell wall biogenesis; peptidoglycan recycling. Catalyzes the specific phosphorylation of 1,6-anhydro-N-acetylmuramic acid (anhMurNAc) with the simultaneous cleavage of the 1,6-anhydro ring, generating MurNAc-6-P. Is required for the utilization of anhMurNAc either imported from the medium or derived from its own cell wall murein, and thus plays a role in cell wall recycling. This chain is Anhydro-N-acetylmuramic acid kinase, found in Bacillus thuringiensis subsp. konkukian (strain 97-27).